Reading from the N-terminus, the 314-residue chain is Thymidylate synthase (314 aa).

Residues arginine 21 and 176-177 (RR) each bind dUMP. Cysteine 196 (nucleophile) is an active-site residue. DUMP-binding positions include 216–219 (RSAD), asparagine 227, and 257–259 (HLY). Aspartate 219 provides a ligand contact to (6R)-5,10-methylene-5,6,7,8-tetrahydrofolate. Serine 313 serves as a coordination point for (6R)-5,10-methylene-5,6,7,8-tetrahydrofolate.

It belongs to the thymidylate synthase family. Bacterial-type ThyA subfamily. Homodimer.

Its subcellular location is the cytoplasm. It catalyses the reaction dUMP + (6R)-5,10-methylene-5,6,7,8-tetrahydrofolate = 7,8-dihydrofolate + dTMP. It functions in the pathway pyrimidine metabolism; dTTP biosynthesis. Functionally, catalyzes the reductive methylation of 2'-deoxyuridine-5'-monophosphate (dUMP) to 2'-deoxythymidine-5'-monophosphate (dTMP) while utilizing 5,10-methylenetetrahydrofolate (mTHF) as the methyl donor and reductant in the reaction, yielding dihydrofolate (DHF) as a by-product. This enzymatic reaction provides an intracellular de novo source of dTMP, an essential precursor for DNA biosynthesis. This is Thymidylate synthase from Listeria monocytogenes serotype 4b (strain F2365).